We begin with the raw amino-acid sequence, 562 residues long: Serine/threonine-protein kinase STN7, chloroplastic (562 aa).

The N-terminal 45 residues, 1–45, are a transit peptide targeting the chloroplast; it reads MATISPGGAYIGTPSPFLGKKLKPFSLTSPILSFKPTVKLNSSCR. Residues 134–452 form the Protein kinase domain; that stretch reads FVVGKKLGEG…AKAALAHPYF (319 aa). Residues 140-148 and lysine 167 each bind ATP; that span reads LGEGSFGVV. Catalysis depends on aspartate 279, which acts as the Proton acceptor. Serine 526 is subject to Phosphoserine. 2 positions are modified to phosphothreonine: threonine 537 and threonine 541.

It belongs to the protein kinase superfamily. Ser/Thr protein kinase family. In terms of processing, phosphorylated.

The protein localises to the plastid. The protein resides in the chloroplast thylakoid membrane. It catalyses the reaction L-seryl-[protein] + ATP = O-phospho-L-seryl-[protein] + ADP + H(+). The enzyme catalyses L-threonyl-[protein] + ATP = O-phospho-L-threonyl-[protein] + ADP + H(+). Functionally, serine/threonine protein kinase required for state transition by phosphorylating light-harvesting complex II outer antennae (LCHII). State transition plays a central role in response to environmental changes and allows to adjust to changing light conditions via the redistribution of light excitation energy between photosystem II (PSII) and photosystem I (PSI). Phosphorylates the minor light harvesting protein LHCB4.2/CP29 and is involved in the light-dependent phosphorylation of TSP9. Acts as a key component of the long-term response (LTR) signaling pathway. Mediates phosphorylation-dependent PTAC16 subcellular localization to regulate plastid gene expression. In Arabidopsis thaliana (Mouse-ear cress), this protein is Serine/threonine-protein kinase STN7, chloroplastic (STN7).